A 344-amino-acid chain; its full sequence is 2,3,4,5-tetrahydropyridine-2,6-dicarboxylate N-succinyltransferase (344 aa).

Residue Glu-205 participates in Mg(2+) binding. The active-site Acyl-anhydride intermediate is the Glu-221. Residues Arg-223, Gly-238, Ser-241, Ala-264, 279–280 (EA), Gly-287, Lys-304, and 317–320 (RRNS) each bind succinyl-CoA.

This sequence belongs to the type 2 tetrahydrodipicolinate N-succinyltransferase family. In terms of assembly, homotrimer.

The protein resides in the cytoplasm. It catalyses the reaction (S)-2,3,4,5-tetrahydrodipicolinate + succinyl-CoA + H2O = (S)-2-succinylamino-6-oxoheptanedioate + CoA. The protein operates within amino-acid biosynthesis; L-lysine biosynthesis via DAP pathway; LL-2,6-diaminopimelate from (S)-tetrahydrodipicolinate (succinylase route): step 1/3. Catalyzes the conversion of the cyclic tetrahydrodipicolinate (THDP) into the acyclic N-succinyl-L-2-amino-6-oxopimelate using succinyl-CoA. The chain is 2,3,4,5-tetrahydropyridine-2,6-dicarboxylate N-succinyltransferase from Pseudomonas putida (strain ATCC 47054 / DSM 6125 / CFBP 8728 / NCIMB 11950 / KT2440).